A 230-amino-acid polypeptide reads, in one-letter code: Glutathione S-transferase 2 (230 aa).

One can recognise a GST N-terminal domain in the interval 2 to 86 (AHFTLYSHAG…YLADKYDTDR (85 aa)). The region spanning 93 to 230 (DDPEYYKLIQ…EELAKAKEQH (138 aa)) is the GST C-terminal domain.

The protein belongs to the GST superfamily.

The enzyme catalyses RX + glutathione = an S-substituted glutathione + a halide anion + H(+). Its function is as follows. Involved in the oxidative stress response and detoxification. The protein is Glutathione S-transferase 2 (gst2) of Schizosaccharomyces pombe (strain 972 / ATCC 24843) (Fission yeast).